The primary structure comprises 156 residues: MIKSLFYTFLQTKHQEESNNSRDPNYPLFPQEIEIRPIAYFPWEIIKTLTTDEIISKFQLPMEKIRDTMLRHASEEDIYRTKFMSCETNILVKDLDTNTIHQGKLWKHPCENNFALRESWIEEFVKRRRLVVGMVVGMYWDFEACMFCFSVLDGRQ.

Positions 57–155 (KFQLPMEKIR…MFCFSVLDGR (99 aa)) form a DNA-binding region, TF-B3.

It localises to the nucleus. The polypeptide is B3 domain-containing protein At5g26805 (Arabidopsis thaliana (Mouse-ear cress)).